The primary structure comprises 312 residues: Olfactory receptor 10P22 (312 aa).

Topologically, residues 1–26 (MGDDNDTDITEFILLGFSGYGFLQGH) are extracellular. An N-linked (GlcNAc...) asparagine glycan is attached at Asn-5. A helical transmembrane segment spans residues 27–47 (LFWGVLCIYVVTLLGNSLIVL). At 48 to 57 (LTLADSALHS) the chain is on the cytoplasmic side. A helical membrane pass occupies residues 58–78 (PMYFFLRHFSVVEILYTTTIV). The Extracellular portion of the chain corresponds to 79–89 (PRMLADLRSSC). The helical transmembrane segment at 90–110 (PTIPLASCFTQLYFFALFGIA) threads the bilayer. At 111–143 (ECCLLTAMAYDRYAAICCPLHYTTLMSQGTYTG) the chain is on the cytoplasmic side. Residues 144 to 164 (LVGASYLAGVISGTTHSIFIF) traverse the membrane as a helical segment. At 165–205 (TLPFRGAKTIHHFLCDILPVLRLATASTFWGEVGNLFVTIT) the chain is on the extracellular side. The chain crosses the membrane as a helical span at residues 206 to 226 (FIFVPFLLIVASYACILVTIL). Residues 227–236 (GVATSQGRQK) lie on the Cytoplasmic side of the membrane. The chain crosses the membrane as a helical span at residues 237–257 (LFSTCSSHLFVVILFFGTATV). Residues 258–271 (AYMRPQADSFGNTD) are Extracellular-facing. A helical transmembrane segment spans residues 272–292 (QILTLVYTVVTPMCNPFVYSL). Topologically, residues 293–312 (RNKEVTGAMRRLMKRYLWGP) are cytoplasmic.

It belongs to the G-protein coupled receptor 1 family.

The protein localises to the cell membrane. Functionally, odorant receptor. The protein is Olfactory receptor 10P22 of Mus musculus (Mouse).